Consider the following 217-residue polypeptide: Thymidylate kinase (217 aa).

An ATP-binding site is contributed by 14–21 (GNEGSGKT).

This sequence belongs to the thymidylate kinase family.

The catalysed reaction is dTMP + ATP = dTDP + ADP. Its function is as follows. Phosphorylation of dTMP to form dTDP in both de novo and salvage pathways of dTTP synthesis. The polypeptide is Thymidylate kinase (Orientia tsutsugamushi (strain Ikeda) (Rickettsia tsutsugamushi)).